Here is a 233-residue protein sequence, read N- to C-terminus: UPF0725 protein At4g17990 (233 aa).

This sequence belongs to the UPF0725 (EMB2204) family.

The protein is UPF0725 protein At4g17990 of Arabidopsis thaliana (Mouse-ear cress).